A 520-amino-acid chain; its full sequence is Poly(A)-specific ribonuclease PNLDC1 (520 aa).

Mg(2+)-binding residues include Asp17, Glu19, Asp260, and Asp354. The chain crosses the membrane as a helical span at residues 497 to 513 (CLLQVCGIVTAWALLAF).

The protein belongs to the CAF1 family. Mg(2+) serves as cofactor.

It is found in the endoplasmic reticulum membrane. It catalyses the reaction Exonucleolytic cleavage of poly(A) to 5'-AMP.. In terms of biological role, 3'-exoribonuclease that has a preference for poly(A) tails of mRNAs, thereby efficiently degrading poly(A) tails. Exonucleolytic degradation of the poly(A) tail is often the first step in the decay of eukaryotic mRNAs and is also used to silence certain maternal mRNAs translationally during oocyte maturation and early embryonic development. May act as a regulator of multipotency in embryonic stem cells. Is a critical factor for proper spermatogenesis, involved in pre-piRNAs processing to generate mature piRNAs. This chain is Poly(A)-specific ribonuclease PNLDC1, found in Pongo abelii (Sumatran orangutan).